Reading from the N-terminus, the 353-residue chain is MALLSTVRGATWGRLVTRHFSHAARHGERPGGEELSRLLLDDLVPTSRLELLFGMTPCLLALQAARRSVARLLLQAGKAGLQGKRAELLRMAEARDIPVLRPRRQKLDTMCRYQVHQGVCMEVSPLRPRPWREAGEASPGDDPQQLWLVLDGIQDPRNFGAVLRSAHFLGVDKVITSRRNSCPLTPVVSKSSAGAMEVMDVFSTDDLTGFLQTKAQQGWLVAGTVGCPSTEDPQSSEIPIMSCLEFLWERPTLLVLGNEGSGLSQEVQASCQLLLTILPRRQLPPGLESLNVSVAAGILLHSICSQRKGFPTEGERRQLLQDPQEPSARSEGLSMAQHPGLSSGPEKERQNEG.

The N-terminal 20 residues, 1-20 (MALLSTVRGATWGRLVTRHF), are a transit peptide targeting the mitochondrion. Residues 311 to 353 (PTEGERRQLLQDPQEPSARSEGLSMAQHPGLSSGPEKERQNEG) form a disordered region.

It belongs to the class IV-like SAM-binding methyltransferase superfamily. RNA methyltransferase TrmH family.

It localises to the mitochondrion matrix. The catalysed reaction is guanosine(1145) in 16S rRNA + S-adenosyl-L-methionine = 2'-O-methylguanosine(1145) in 16S rRNA + S-adenosyl-L-homocysteine + H(+). Functionally, S-adenosyl-L-methionine-dependent 2'-O-ribose methyltransferase that catalyzes the formation of 2'-O-methylguanosine at position 1145 (Gm1145) in the 16S mitochondrial large subunit ribosomal RNA (mtLSU rRNA), a universally conserved modification in the peptidyl transferase domain of the mtLSU rRNA. This chain is rRNA methyltransferase 1, mitochondrial, found in Homo sapiens (Human).